Consider the following 336-residue polypeptide: Ultraviolet-sensitive opsin (336 aa).

Topologically, residues 1–29 are extracellular; sequence MDAWTYQFGNLSKISPFEGPQYHLAPKWA. A glycan (N-linked (GlcNAc...) asparagine) is linked at Asn-10. A helical transmembrane segment spans residues 30 to 54; sequence FYLQAAFMGFVFFVGTPLNAIVLFV. Residues 55-66 lie on the Cytoplasmic side of the membrane; it reads TMKYKKLRQPLN. The helical transmembrane segment at 67-91 threads the bilayer; that stretch reads YILVNISLGGFIFDTFSVSQVFFSA. Topologically, residues 92–106 are extracellular; the sequence is LRGYYFFGYTLCAME. Cysteines 103 and 180 form a disulfide. A helical transmembrane segment spans residues 107-126; that stretch reads AAMGSIAGLVTGWSLAVLAF. Residues 127 to 145 are Cytoplasmic-facing; sequence ERYVVICKPFGSFKFGQSQ. Residues 146–169 form a helical membrane-spanning segment; sequence ALGAVALTWIIGIGCATPPFWGWS. Residues 170–195 are Extracellular-facing; sequence RYIPEGIGTACGPDWYTKNEEYNTES. A helical transmembrane segment spans residues 196-223; it reads YTYFLLVSCFMMPIMIITFSYSQLLGAL. Topologically, residues 224–245 are cytoplasmic; it reads RAVAAQQAESASTQKAEKEVSR. A helical membrane pass occupies residues 246–269; the sequence is MVVVMVGSFVVCYGPYAITALYFS. Residues 270–277 are Extracellular-facing; that stretch reads YAEDSNKD. A helical transmembrane segment spans residues 278 to 302; it reads YRLVAIPSLFSKSSCVYNPLIYAFM. An N6-(retinylidene)lysine modification is found at Lys-289. Residues 303–336 are Cytoplasmic-facing; sequence NKQFNACIMETVFGKKIDESSEVSSKTETSSVSA.

Belongs to the G-protein coupled receptor 1 family. Opsin subfamily. Post-translationally, phosphorylated on some or all of the serine and threonine residues present in the C-terminal region.

It localises to the membrane. Functionally, visual pigments are the light-absorbing molecules that mediate vision. They consist of an apoprotein, opsin, covalently linked to cis-retinal. The chain is Ultraviolet-sensitive opsin from Carassius auratus (Goldfish).